The primary structure comprises 202 residues: Cutinase (202 aa).

A signal peptide spans 1–20 (MKTSAQQLLSALLLPLSVLA). A disulfide bond links cysteine 31 and cysteine 106. Serine 117 serves as the catalytic Nucleophile. Cysteines 165 and 172 form a disulfide. The active site involves aspartate 169. The Proton donor/acceptor role is filled by histidine 182.

Belongs to the cutinase family. In terms of processing, the 2 disulfide bonds play a critical role in holding the catalytic residues in juxta-position; reduction of the disulfide bridges results in the complete inactivation of the enzyme.

Its subcellular location is the secreted. It carries out the reaction cutin + H2O = cutin monomers.. Functionally, catalyzes the hydrolysis of complex carboxylic polyesters found in the cell wall of plants. Degrades cutin, a macromolecule that forms the structure of the plant cuticle. Allows pathogenic fungi to penetrate through the cuticular barrier into the host plant during the initial stage of fungal infection. In Botryotinia fuckeliana (Noble rot fungus), this protein is Cutinase.